A 1314-amino-acid polypeptide reads, in one-letter code: MDFFNLNNNNNNNNTTTTTTTTNNNNTNNNNTNNNNNPANNTNNNNSTGHSSNTNNNTNNNNTNTGASGVDDFQNFFDPKPFDQNLDSNNNNSNSNNNDNNNSNTVASSTNFTSPTAVVNNAAPANVTGGKAANFIQNQSPQFNSPYDSNNSNTNLNSLSPQAILAKNSIIDSSNLPLQAQQQLYGGNNNNNSTGIANDNVITPHFITNVQSISQNSSSSTPNTNSNSTPNANQQFLPFNNSASNNGNLTSNQLISNYAASNSMDRSSSASNEFVPNTSDNNNNSNNHNMRNNSNNKTSNNNNVTAVPAATPANTNNSTSNANTVFSERAAMFAALQQKQQQRFQALQQQQQQQQNQQQQNQQPQQQQQQQQNPKFLQSQRQQQQRSILQSLNPALQEKISTELNNKQYELFMKSLIENCKKRNMPLQSIPEIGNRKINLFYLYMLVQKFGGADQVTRTQQWSMVAQRLQISDYQQLESIYFRILLPYERHMISQEGIKETQAKRIFLQQFLQELLKKVQQQQQAAALANANNNINSASSAPTPAAPGASVPATAAPGTEAGIVPVSANTPKSLNSNININVNNNNIGQQQVKKPRKQRVKKKTKKELELERKEREDFQKRQQKLLEDQQRQQKLLLETKLRQQYEIELKKLPKVYKRSIVRNYKPLINRLKHYNGYDINYISKIGEKIDSNKPIFLFAPELGAINLHALSMSLQSKNLGEINTALNTLLVTSADSNLKISLVKYPELLDSLAILGMNLLSNLSQNVVPYHRNTSDYYYEDAGSNQYYVTQHDKMVDKIFEKVNNNATLTPNDSNDEKVTILVDSLTGNQLPTPTPTEMEPDLDTECFISMQSTSPAVKQWDLLPEPIRFLPNQFPLKIHRTPYLTSLKKIKDEIDDPFTKINTRGAEDPKVLINDQLSTISMILRNISFSDNNSRIMSRNFYLKRFISDLLWLVLIHPENFTCNRKILNFKKDLVIVLSNISHLLEIASSIDCLLILILVISFGQPKLNPMASSSSFGSESLTFNEFQLQWGKYQTFGVDILAKLFSLEKPNLNYFKSILLNKNTGNNLYDRNSNNNHKDKKLLRRLLNLYNDNNKNNNNRHNLLNDVVSFLFSAIPLQQVLSQSADPSLLIDQFSPVISQSLTSILVIVQKILPLSNEVFEISENNSDSNSNNNGNKDSSFNFNKNLPFVWLSSEENIGSGLLKLSEIILNINNSTSKNTLLQQQNYSKVLLPSINISCVQLIKCLVEKSICFENCLNNDPEILKKIASIPNLFPTDLEIFQLFTNPSVDIQIINQYQLLYNLKNDILTNLE.

Composition is skewed to low complexity over residues 1–65, 88–112, and 213–235; these read MDFF…NTNT, SNNNNSNSNNNDNNNSNTVASSTNF, and ISQNSSSSTPNTNSNSTPNANQQ. Disordered stretches follow at residues 1 to 112, 213 to 250, 262 to 321, and 355 to 384; these read MDFF…STNF, ISQNSSSSTPNTNSNSTPNANQQFLPFNNSASNNGNLT, NSMD…STSN, and QNQQQQNQQPQQQQQQQQNPKFLQSQRQQQ. Residues 1 to 323 form a prion domain (PrD) region; that stretch reads MDFFNLNNNN…NTNNSTSNAN (323 aa). Positions 236 to 250 are enriched in polar residues; it reads FLPFNNSASNNGNLT. The 88-residue stretch at 406-493 folds into the ARID domain; sequence NKQYELFMKS…ILLPYERHMI (88 aa). Low complexity predominate over residues 581 to 592; sequence NVNNNNIGQQQV. Positions 581 to 617 are disordered; the sequence is NVNNNNIGQQQVKKPRKQRVKKKTKKELELERKERED. Positions 593 to 605 are enriched in basic residues; that stretch reads KKPRKQRVKKKTK. Basic and acidic residues predominate over residues 606-617; it reads KELELERKERED. The C4-type zinc finger occupies 1241-1258; it reads CVQLIKCLVEKSICFENC.

It belongs to the SWI1 family. Component of the SWI/SNF global transcription activator complex. The 1.14 MDa SWI/SNF complex is composed of 11 different subunits: one copy each of SWI1, SNF2/SWI2, SNF5, SNF12/SWP73, ARP7/SWP61, ARP9/SWP59; two copies each of SWI3, SNF6, SNF11, SWP82; and three copies of TAF14/SWP29.

It localises to the nucleus. Functionally, involved in transcriptional activation. Component of the SWI/SNF complex, an ATP-dependent chromatin remodeling complex, which is required for the positive and negative regulation of gene expression of a large number of genes. It changes chromatin structure by altering DNA-histone contacts within a nucleosome, leading eventually to a change in nucleosome position, thus facilitating or repressing binding of gene-specific transcription factors. In Saccharomyces cerevisiae (strain ATCC 204508 / S288c) (Baker's yeast), this protein is SWI/SNF chromatin-remodeling complex subunit SWI1 (SWI1).